We begin with the raw amino-acid sequence, 407 residues long: Nicotinate phosphoribosyltransferase (407 aa).

A Phosphohistidine; by autocatalysis modification is found at His228.

Belongs to the NAPRTase family. Post-translationally, transiently phosphorylated on a His residue during the reaction cycle. Phosphorylation strongly increases the affinity for substrates and increases the rate of nicotinate D-ribonucleotide production. Dephosphorylation regenerates the low-affinity form of the enzyme, leading to product release.

The catalysed reaction is nicotinate + 5-phospho-alpha-D-ribose 1-diphosphate + ATP + H2O = nicotinate beta-D-ribonucleotide + ADP + phosphate + diphosphate. The protein operates within cofactor biosynthesis; NAD(+) biosynthesis; nicotinate D-ribonucleotide from nicotinate: step 1/1. 100-fold more active in the presence of saturating ATP. In terms of biological role, catalyzes the synthesis of beta-nicotinate D-ribonucleotide from nicotinate and 5-phospho-D-ribose 1-phosphate at the expense of ATP. Functions in the deamidating salvage pathway for production of NAD from nicotinamide. Displays a strict preference for nicotinate over nicotinamide substrate. This chain is Nicotinate phosphoribosyltransferase, found in Acinetobacter baylyi (strain ATCC 33305 / BD413 / ADP1).